The sequence spans 281 residues: Ribosomal RNA small subunit methyltransferase A (281 aa).

S-adenosyl-L-methionine contacts are provided by Asn-18, Leu-20, Gly-45, Glu-66, Asp-91, and Asn-118.

Belongs to the class I-like SAM-binding methyltransferase superfamily. rRNA adenine N(6)-methyltransferase family. RsmA subfamily.

Its subcellular location is the cytoplasm. The catalysed reaction is adenosine(1518)/adenosine(1519) in 16S rRNA + 4 S-adenosyl-L-methionine = N(6)-dimethyladenosine(1518)/N(6)-dimethyladenosine(1519) in 16S rRNA + 4 S-adenosyl-L-homocysteine + 4 H(+). In terms of biological role, specifically dimethylates two adjacent adenosines (A1518 and A1519) in the loop of a conserved hairpin near the 3'-end of 16S rRNA in the 30S particle. May play a critical role in biogenesis of 30S subunits. This Histophilus somni (strain 129Pt) (Haemophilus somnus) protein is Ribosomal RNA small subunit methyltransferase A.